Here is a 445-residue protein sequence, read N- to C-terminus: MNEEYDVIVLGTGLTECILSGIMSVNGKKVLHMDRNPYYGGESASITPLEDLYKRFKIPGAPPASMGRGRDWNVDLIPKFLMANGQLVKMLLFTEVTRYLDFKVTEGSFVYKGGKIYKVPSTEAEALASSLMGLFEKRRFRKFLVYVANFDENDPRTFEGIDPKKTSMREVYKKFDLGQDVIDFTGHALALYRTDDYLDQPCCETINRIKLYSESLARYGKSPYLYPLYGLGELPQGFARLSAIYGGTYMLNKPIEEIIMQNGKVIGVKSEGEIARCKQLICDPSYVKDRVEKVGQVIRVICILSHPIKNTNDANSCQIIIPQNQVNRKSDIYVCMISSAHNVAAQGKYIAIASTTVETKEPEKEIRPALELLEPIEQKFVSISDLLVPKDLGTESQIFISRTYDATTHFETTCDDIKDIYKRMMGSEFDFEEMKRKKNDIYGEE.

An N-acetylmethionine modification is found at methionine 1. Position 57 is an N6-succinyllysine (lysine 57). Lysine 112 is modified (N6-acetyllysine). Serine 130 bears the Phosphoserine mark. Lysine 269 is subject to N6-acetyllysine. Position 382 is a phosphoserine (serine 382).

It belongs to the Rab GDI family. In terms of assembly, interacts with RHOH. Interacts with the GDP-bound inactive forms of RAB3A, RAB3B, RAB3C, RAB5A, RAB5B, RAB5C, RAB8A, RAB8B, RAB10, RAB12, RAB35, and RAB43; binds RAB3D to a lesser extent. Interacts with DZIP1; this interaction negatively regulates the interaction of GDI2 with GDP-bound RAB8A. Ubiquitously expressed.

The protein resides in the cytoplasm. It is found in the membrane. The protein localises to the golgi apparatus. It localises to the trans-Golgi network. GDP-dissociation inhibitor preventing the GDP to GTP exchange of most Rab proteins. By keeping these small GTPases in their inactive GDP-bound form regulates intracellular membrane trafficking. Negatively regulates protein transport to the cilium and ciliogenesis through the inhibition of RAB8A. In Bos taurus (Bovine), this protein is Rab GDP dissociation inhibitor beta (GDI2).